The primary structure comprises 505 residues: Deoxyguanosinetriphosphate triphosphohydrolase (505 aa).

The HD domain maps to 66–273; sequence RLTHSMEVQQ…MEAADDISYC (208 aa).

This sequence belongs to the dGTPase family. Type 1 subfamily. In terms of assembly, homotetramer. The cofactor is Mg(2+).

The enzyme catalyses dGTP + H2O = 2'-deoxyguanosine + triphosphate + H(+). In terms of biological role, dGTPase preferentially hydrolyzes dGTP over the other canonical NTPs. This chain is Deoxyguanosinetriphosphate triphosphohydrolase, found in Escherichia coli O17:K52:H18 (strain UMN026 / ExPEC).